A 2767-amino-acid polypeptide reads, in one-letter code: Serine/threonine-protein kinase ATM (2767 aa).

An FAT domain is found at 1713–2317 (NVVMASNHCQ…FYQLYPLVFA (605 aa)). Residues 2419-2734 (WTNETTQCGG…KLDGREAGTM (316 aa)) form the PI3K/PI4K catalytic domain. The interval 2425–2431 (QCGGLNA) is G-loop. The interval 2601–2609 (GLGDRHTQN) is catalytic loop. The interval 2621–2645 (HIDFGIAFEQGKIQTTPETVPFRLT) is activation loop. The FATC domain occupies 2735-2767 (GDSNVEAQVERLINEATLPSNLCMLFPGWDPHL).

Belongs to the PI3/PI4-kinase family. ATM subfamily.

The protein resides in the nucleus. It localises to the chromosome. Its subcellular location is the telomere. It carries out the reaction L-seryl-[protein] + ATP = O-phospho-L-seryl-[protein] + ADP + H(+). The enzyme catalyses L-threonyl-[protein] + ATP = O-phospho-L-threonyl-[protein] + ADP + H(+). In terms of biological role, serine/threonine-protein kinase which recognizes the substrate consensus sequence [ST]-Q. Required to suppress spontaneous apoptosis of proliferating cells during development, and for their proper differentiation. Required for female fertility. Protects telomeres from fusion, maybe by recruiting or maintaining chromatin-modifying complexes such as Su(var)205/HP1. May activate checkpoint signaling in response to DNA double-stranded breaks induced by low-dose ionizing radiation. May phosphorylate histone H2AV. The protein is Serine/threonine-protein kinase ATM (tefu) of Drosophila melanogaster (Fruit fly).